The following is a 230-amino-acid chain: 5'-methylthioadenosine/S-adenosylhomocysteine nucleosidase (230 aa).

The active-site Proton acceptor is Glu12. Substrate is bound by residues Gly78, Met153, and 174 to 175 (ME). Catalysis depends on Asp198, which acts as the Proton donor.

Belongs to the PNP/UDP phosphorylase family. MtnN subfamily.

It carries out the reaction S-adenosyl-L-homocysteine + H2O = S-(5-deoxy-D-ribos-5-yl)-L-homocysteine + adenine. The enzyme catalyses S-methyl-5'-thioadenosine + H2O = 5-(methylsulfanyl)-D-ribose + adenine. The catalysed reaction is 5'-deoxyadenosine + H2O = 5-deoxy-D-ribose + adenine. It functions in the pathway amino-acid biosynthesis; L-methionine biosynthesis via salvage pathway; S-methyl-5-thio-alpha-D-ribose 1-phosphate from S-methyl-5'-thioadenosine (hydrolase route): step 1/2. In terms of biological role, catalyzes the irreversible cleavage of the glycosidic bond in both 5'-methylthioadenosine (MTA) and S-adenosylhomocysteine (SAH/AdoHcy) to adenine and the corresponding thioribose, 5'-methylthioribose and S-ribosylhomocysteine, respectively. Also cleaves 5'-deoxyadenosine, a toxic by-product of radical S-adenosylmethionine (SAM) enzymes, into 5-deoxyribose and adenine. The sequence is that of 5'-methylthioadenosine/S-adenosylhomocysteine nucleosidase from Lysinibacillus sphaericus (strain C3-41).